Consider the following 331-residue polypeptide: MATGQKLMRAIRVFEFGGPEVLKLQSDVVVPVPQSHQVLIKVHACGVNPVETYIRSGAYSRKPALPYTPGSDVAGIIESVGDKVSAFKKGDRVFCYSTVSGGYAEFALAADDTIYPLPETLNFRQGAALGIPYFTACRALFHSARARAGESVLVHGASGGVGLATCQIARAHGLKVLGTAGSEEGKKLVLQNGAHEVFNHKEANYIDKIKMSVGDKDKGVDVIIEMLANENLSNDLKLLSHGGRVVVVGCRGPIEINPRDTMAKETSIIGVSLSSSTKEEFQQFAGLLQAGIEKGWVKPVIGSEYPLEKAAQAHEDIIHGSGKTGKMILLL.

Alanine 2 carries the N-acetylalanine modification. Lysine 23 is modified (N6-acetyllysine). The residue at position 35 (serine 35) is a Phosphoserine. Residues tyrosine 53, 158-161 (SGGV), and glycine 181 each bind NADP(+). Lysine 186 carries the post-translational modification N6-acetyllysine. Residues histidine 200, asparagine 231, 248-251 (VGCR), and 271-273 (VSL) contribute to the NADP(+) site. Lysine 298 is modified (N6-succinyllysine).

The protein belongs to the zinc-containing alcohol dehydrogenase family. Quinone oxidoreductase subfamily. As to quaternary structure, homotetramer.

It is found in the cytoplasm. The catalysed reaction is 2 a quinone + NADPH + H(+) = 2 a 1,4-benzosemiquinone + NADP(+). In terms of biological role, does not have alcohol dehydrogenase activity. Binds NADP and acts through a one-electron transfer process. Orthoquinones, such as 1,2-naphthoquinone or 9,10-phenanthrenequinone, are the best substrates (in vitro). May act in the detoxification of xenobiotics. Interacts with (AU)-rich elements (ARE) in the 3'-UTR of target mRNA species and enhances their stability. NADPH binding interferes with mRNA binding. The sequence is that of Quinone oxidoreductase (Cryz) from Mus musculus (Mouse).